Reading from the N-terminus, the 78-residue chain is Small ribosomal subunit protein bS16c (78 aa).

This sequence belongs to the bacterial ribosomal protein bS16 family.

It localises to the plastid. The protein localises to the chloroplast. The protein is Small ribosomal subunit protein bS16c of Phaeodactylum tricornutum (strain CCAP 1055/1).